A 468-amino-acid polypeptide reads, in one-letter code: Ribulose bisphosphate carboxylase large chain (468 aa).

Lys-5 is modified (N6,N6,N6-trimethyllysine). Substrate contacts are provided by Asn-114 and Thr-164. Lys-166 (proton acceptor) is an active-site residue. Position 168 (Lys-168) interacts with substrate. Lys-192, Asp-194, and Glu-195 together coordinate Mg(2+). Residue Lys-192 is modified to N6-carboxylysine. The active-site Proton acceptor is the His-285. Positions 286, 318, and 370 each coordinate substrate.

This sequence belongs to the RuBisCO large chain family. Type I subfamily. Heterohexadecamer of 8 large chains and 8 small chains; disulfide-linked. The disulfide link is formed within the large subunit homodimers. The cofactor is Mg(2+). Post-translationally, the disulfide bond which can form in the large chain dimeric partners within the hexadecamer appears to be associated with oxidative stress and protein turnover.

It is found in the plastid. The protein resides in the chloroplast. It carries out the reaction 2 (2R)-3-phosphoglycerate + 2 H(+) = D-ribulose 1,5-bisphosphate + CO2 + H2O. It catalyses the reaction D-ribulose 1,5-bisphosphate + O2 = 2-phosphoglycolate + (2R)-3-phosphoglycerate + 2 H(+). Functionally, ruBisCO catalyzes two reactions: the carboxylation of D-ribulose 1,5-bisphosphate, the primary event in carbon dioxide fixation, as well as the oxidative fragmentation of the pentose substrate in the photorespiration process. Both reactions occur simultaneously and in competition at the same active site. In Nolana spathulata (Chilean bell flower), this protein is Ribulose bisphosphate carboxylase large chain.